The following is a 147-amino-acid chain: SsrA-binding protein (147 aa).

The segment at 124–147 (KKHDKRQDIKDRDWARKQARQDFS) is disordered. Over residues 128-147 (KRQDIKDRDWARKQARQDFS) the composition is skewed to basic and acidic residues.

Belongs to the SmpB family.

The protein localises to the cytoplasm. Its function is as follows. Required for rescue of stalled ribosomes mediated by trans-translation. Binds to transfer-messenger RNA (tmRNA), required for stable association of tmRNA with ribosomes. tmRNA and SmpB together mimic tRNA shape, replacing the anticodon stem-loop with SmpB. tmRNA is encoded by the ssrA gene; the 2 termini fold to resemble tRNA(Ala) and it encodes a 'tag peptide', a short internal open reading frame. During trans-translation Ala-aminoacylated tmRNA acts like a tRNA, entering the A-site of stalled ribosomes, displacing the stalled mRNA. The ribosome then switches to translate the ORF on the tmRNA; the nascent peptide is terminated with the 'tag peptide' encoded by the tmRNA and targeted for degradation. The ribosome is freed to recommence translation, which seems to be the essential function of trans-translation. This chain is SsrA-binding protein, found in Neorickettsia sennetsu (strain ATCC VR-367 / Miyayama) (Ehrlichia sennetsu).